We begin with the raw amino-acid sequence, 604 residues long: Proline--tRNA ligase (604 aa).

This sequence belongs to the class-II aminoacyl-tRNA synthetase family. ProS type 1 subfamily. Homodimer.

Its subcellular location is the cytoplasm. It catalyses the reaction tRNA(Pro) + L-proline + ATP = L-prolyl-tRNA(Pro) + AMP + diphosphate. In terms of biological role, catalyzes the attachment of proline to tRNA(Pro) in a two-step reaction: proline is first activated by ATP to form Pro-AMP and then transferred to the acceptor end of tRNA(Pro). As ProRS can inadvertently accommodate and process non-cognate amino acids such as alanine and cysteine, to avoid such errors it has two additional distinct editing activities against alanine. One activity is designated as 'pretransfer' editing and involves the tRNA(Pro)-independent hydrolysis of activated Ala-AMP. The other activity is designated 'posttransfer' editing and involves deacylation of mischarged Ala-tRNA(Pro). The misacylated Cys-tRNA(Pro) is not edited by ProRS. This is Proline--tRNA ligase from Trichormus variabilis (strain ATCC 29413 / PCC 7937) (Anabaena variabilis).